Here is a 403-residue protein sequence, read N- to C-terminus: Probable N-acetyltransferase HLS1 (403 aa).

The N-acetyltransferase domain occupies 2-177 (TVVREYDPTR…VNPVYAHRVN (176 aa)).

Belongs to the acetyltransferase family.

Functionally, ethylene-responsive N-acetyltransferase required for differential cell elongation in the hypocotyl. Regulates apical hook formation of dark-grown seedlings. May control differential cell growth by regulating auxin activity. May be involved in negative feedback regulation of auxin homeostasis through the control of GH3-like genes. Modulates de novo shoot organogenesis. The chain is Probable N-acetyltransferase HLS1 (HLS1) from Arabidopsis thaliana (Mouse-ear cress).